Here is a 198-residue protein sequence, read N- to C-terminus: Recombination protein RecR (198 aa).

A C4-type zinc finger spans residues 57 to 72; sequence CSVCCNLTDQDPCQIC. Residues 80 to 175 form the Toprim domain; sequence STICVVQEPR…KVTRIARGLP (96 aa).

It belongs to the RecR family.

Functionally, may play a role in DNA repair. It seems to be involved in an RecBC-independent recombinational process of DNA repair. It may act with RecF and RecO. The chain is Recombination protein RecR from Symbiobacterium thermophilum (strain DSM 24528 / JCM 14929 / IAM 14863 / T).